A 458-amino-acid chain; its full sequence is Tubulin beta chain (458 aa).

The GTP site is built by glutamine 11, glutamate 69, serine 138, glycine 142, threonine 143, glycine 144, asparagine 204, and asparagine 226. Glutamate 69 lines the Mg(2+) pocket. Residues 426-458 are disordered; that stretch reads EAATVEGEEEEDEYAEGGVVNGDQSYDEPYQAA. Acidic residues predominate over residues 431–440; sequence EGEEEEDEYA.

It belongs to the tubulin family. As to quaternary structure, dimer of alpha and beta chains. A typical microtubule is a hollow water-filled tube with an outer diameter of 25 nm and an inner diameter of 15 nM. Alpha-beta heterodimers associate head-to-tail to form protofilaments running lengthwise along the microtubule wall with the beta-tubulin subunit facing the microtubule plus end conferring a structural polarity. Microtubules usually have 13 protofilaments but different protofilament numbers can be found in some organisms and specialized cells. The cofactor is Mg(2+).

It is found in the cytoplasm. Its subcellular location is the cytoskeleton. Its function is as follows. Tubulin is the major constituent of microtubules, a cylinder consisting of laterally associated linear protofilaments composed of alpha- and beta-tubulin heterodimers. Microtubules grow by the addition of GTP-tubulin dimers to the microtubule end, where a stabilizing cap forms. Below the cap, tubulin dimers are in GDP-bound state, owing to GTPase activity of alpha-tubulin. This chain is Tubulin beta chain (TUBB1), found in Pyropia yezoensis (Susabi-nori).